A 156-amino-acid polypeptide reads, in one-letter code: Arginine repressor (156 aa).

This sequence belongs to the ArgR family.

It is found in the cytoplasm. The protein operates within amino-acid biosynthesis; L-arginine biosynthesis [regulation]. Regulates arginine biosynthesis genes. This is Arginine repressor from Klebsiella pneumoniae (strain 342).